A 513-amino-acid chain; its full sequence is Bifunctional purine biosynthesis protein PurH (513 aa).

The region spanning M1–T146 is the MGS-like domain.

This sequence belongs to the PurH family.

It carries out the reaction (6R)-10-formyltetrahydrofolate + 5-amino-1-(5-phospho-beta-D-ribosyl)imidazole-4-carboxamide = 5-formamido-1-(5-phospho-D-ribosyl)imidazole-4-carboxamide + (6S)-5,6,7,8-tetrahydrofolate. The enzyme catalyses IMP + H2O = 5-formamido-1-(5-phospho-D-ribosyl)imidazole-4-carboxamide. It functions in the pathway purine metabolism; IMP biosynthesis via de novo pathway; 5-formamido-1-(5-phospho-D-ribosyl)imidazole-4-carboxamide from 5-amino-1-(5-phospho-D-ribosyl)imidazole-4-carboxamide (10-formyl THF route): step 1/1. The protein operates within purine metabolism; IMP biosynthesis via de novo pathway; IMP from 5-formamido-1-(5-phospho-D-ribosyl)imidazole-4-carboxamide: step 1/1. The sequence is that of Bifunctional purine biosynthesis protein PurH from Synechococcus elongatus (strain ATCC 33912 / PCC 7942 / FACHB-805) (Anacystis nidulans R2).